The sequence spans 458 residues: O-acyltransferase WSD (458 aa).

Histidine 133 serves as the catalytic Proton acceptor.

The protein belongs to the long-chain O-acyltransferase family.

It carries out the reaction a long chain fatty alcohol + a fatty acyl-CoA = a wax ester + CoA. It catalyses the reaction an acyl-CoA + a 1,2-diacyl-sn-glycerol = a triacyl-sn-glycerol + CoA. Its pathway is glycerolipid metabolism; triacylglycerol biosynthesis. Bifunctional wax ester synthase/diacylglycerol acyltransferase (WS and DGAT). Catalyzes the terminal and only committed step in triacylglycerol synthesis by using diacylglycerol and fatty acyl CoA as substrates. Required for storage lipid synthesis. WS uses C(12)-CoA to C(18)-CoA substrates whereas DGAT prefers C(20)-CoA. Upon expression in E.coli and Pseudomonas citronellolis (DSM 50332) both WS and DGAT activities increase. This chain is O-acyltransferase WSD (wax-dgaT), found in Acinetobacter baylyi (strain ATCC 33305 / BD413 / ADP1).